The primary structure comprises 98 residues: NADH-ubiquinone oxidoreductase chain 4L (98 aa).

A run of 3 helical transmembrane segments spans residues P2–F22, M37–F57, and I61–V81.

Belongs to the complex I subunit 4L family. Core subunit of respiratory chain NADH dehydrogenase (Complex I) which is composed of 45 different subunits.

Its subcellular location is the mitochondrion inner membrane. It carries out the reaction a ubiquinone + NADH + 5 H(+)(in) = a ubiquinol + NAD(+) + 4 H(+)(out). Core subunit of the mitochondrial membrane respiratory chain NADH dehydrogenase (Complex I) which catalyzes electron transfer from NADH through the respiratory chain, using ubiquinone as an electron acceptor. Part of the enzyme membrane arm which is embedded in the lipid bilayer and involved in proton translocation. The sequence is that of NADH-ubiquinone oxidoreductase chain 4L (MT-ND4L) from Varecia rubra (Red ruffed lemur).